The chain runs to 134 residues: Arsenate reductase 2 (134 aa).

Active-site nucleophile residues include Cys11, Cys83, and Cys90. Intrachain disulfides connect Cys11–Cys83 and Cys83–Cys90.

It belongs to the low molecular weight phosphotyrosine protein phosphatase family. Thioredoxin-coupled ArsC subfamily.

The protein resides in the cytoplasm. The enzyme catalyses arsenate + [thioredoxin]-dithiol + H(+) = arsenite + [thioredoxin]-disulfide + H2O. Functionally, catalyzes the reduction of arsenate [As(V)] to arsenite [As(III)]. In Bacillus cereus (strain ATCC 10987 / NRS 248), this protein is Arsenate reductase 2.